Reading from the N-terminus, the 118-residue chain is Basic phospholipase A2 homolog 1 (118 aa).

7 disulfides stabilise this stretch: C11–C71, C27–C117, C29–C45, C44–C98, C51–C91, C60–C84, and C78–C89. Residues N106–K118 are important for membrane-damaging activities in eukaryotes and bacteria; heparin-binding.

Belongs to the phospholipase A2 family. Group I subfamily. D49 sub-subfamily. As to expression, expressed by the venom gland.

Its subcellular location is the secreted. This chain is Basic phospholipase A2 homolog 1, found in Laticauda colubrina (Yellow-lipped sea krait).